Here is a 353-residue protein sequence, read N- to C-terminus: Rhodopsin (353 aa).

The Extracellular segment spans residues 1–36 (MNGTEGPFFYVPMVNTTGIVRSPYEYPQYYLVNPAA). N-linked (GlcNAc...) asparagine glycans are attached at residues Asn-2 and Asn-15. The chain crosses the membrane as a helical span at residues 37-61 (YAALGAYMFLLILVGFPINFLTLYV). The Cytoplasmic segment spans residues 62–73 (TIEHKKLRTPLN). A helical transmembrane segment spans residues 74 to 96 (YILLNLAVADLFMVLGGFTTTMY). Topologically, residues 97 to 110 (TSMHGYFVLGRLGC) are extracellular. Cys-110 and Cys-187 are joined by a disulfide. Residues 111–133 (NIEGFFATLGGEIALWSLVVLAI) traverse the membrane as a helical segment. The 'Ionic lock' involved in activated form stabilization motif lies at 134–136 (ERW). At 134 to 152 (ERWVVVCKPISNFRFGENH) the chain is on the cytoplasmic side. A helical transmembrane segment spans residues 153-173 (AIMGLAFTWTMAMACAAPPLV). The Extracellular portion of the chain corresponds to 174–202 (GWSRYIPEGMQCSCGIDYYTRAEGFNNES). Residue Asn-200 is glycosylated (N-linked (GlcNAc...) asparagine). A helical transmembrane segment spans residues 203 to 224 (FVIYMFICHFTIPLTVVFFCYG). The Cytoplasmic segment spans residues 225–252 (RLLCAVKEAAAAQQESETTQRAEKEVTR). The chain crosses the membrane as a helical span at residues 253–274 (MVIMMVIAFLVCWLPYASVAWY). The Extracellular segment spans residues 275–286 (IFTHQGSEFGPV). Residues 287-308 (FMTIPAFFAKSSSIYNPMIYIC) form a helical membrane-spanning segment. Lys-296 carries the N6-(retinylidene)lysine modification. Residues 309-353 (LNKQFRHCMITTLCCGKNPFEEEEGASTASKTEASSVSSSSVSPA) are Cytoplasmic-facing. S-palmitoyl cysteine attachment occurs at residues Cys-322 and Cys-323. A disordered region spans residues 331–353 (EEGASTASKTEASSVSSSSVSPA). The span at 334–353 (ASTASKTEASSVSSSSVSPA) shows a compositional bias: low complexity.

Belongs to the G-protein coupled receptor 1 family. Opsin subfamily. In terms of processing, phosphorylated on some or all of the serine and threonine residues present in the C-terminal region. Contains one covalently linked retinal chromophore.

It localises to the membrane. The protein localises to the cell projection. Its subcellular location is the cilium. It is found in the photoreceptor outer segment. Functionally, photoreceptor required for image-forming vision at low light intensity. While most salt water fish species use retinal as chromophore, most freshwater fish use 3-dehydroretinal, or a mixture of retinal and 3-dehydroretinal. Light-induced isomerization of 11-cis to all-trans retinal triggers a conformational change that activates signaling via G-proteins. Subsequent receptor phosphorylation mediates displacement of the bound G-protein alpha subunit by arrestin and terminates signaling. The protein is Rhodopsin (rho) of Diplodus annularis (Annular seabream).